The following is a 252-amino-acid chain: Cytochrome b6-f complex iron-sulfur subunit, chloroplastic (252 aa).

Residues 94-114 (LVLAAVAPVVASAGGCYLYYF) form a helical membrane-spanning segment. One can recognise a Rieske domain in the interval 141 to 235 (WFKSHKKNAR…VEDDNGKILL (95 aa)). 4 residues coordinate [2Fe-2S] cluster: C181, H183, C199, and H202. Cysteines 186 and 201 form a disulfide.

This sequence belongs to the Rieske iron-sulfur protein family. The 4 large subunits of the cytochrome b6-f complex are cytochrome b6, subunit IV (17 kDa polypeptide, petD), cytochrome f and the Rieske protein, while the 4 small subunits are petG, petL, petM and petN. The complex functions as a dimer. [2Fe-2S] cluster is required as a cofactor.

The protein resides in the plastid. It is found in the chloroplast thylakoid membrane. It carries out the reaction 2 oxidized [plastocyanin] + a plastoquinol + 2 H(+)(in) = 2 reduced [plastocyanin] + a plastoquinone + 4 H(+)(out). Component of the cytochrome b6-f complex, which mediates electron transfer between photosystem II (PSII) and photosystem I (PSI), cyclic electron flow around PSI, and state transitions. The chain is Cytochrome b6-f complex iron-sulfur subunit, chloroplastic (petC) from Bigelowiella natans (Pedinomonas minutissima).